Consider the following 20-residue polypeptide: Cytochrome P450-RR1 (20 aa).

This sequence belongs to the cytochrome P450 family. It depends on heme as a cofactor.

Its function is as follows. P450-RRI catalyzes the O-dealkylation of 2-ethoxyphenol and 2-methoxyphenol to produce catechol. The cytochrome binds other ortho-substituted phenols, including 2-ethoxyphenol, 2-methylphenol and 2-chlorophenol. The chain is Cytochrome P450-RR1 from Rhodococcus rhodochrous.